The sequence spans 437 residues: Glutamyl-tRNA reductase (437 aa).

Substrate contacts are provided by residues 46–49, S97, 102–104, and Q108; these read TCNR and EEQ. Residue C47 is the Nucleophile of the active site. 177–182 contacts NADP(+); that stretch reads GAGEMG. Residues 410–437 are disordered; that stretch reads NGRVSEGKDAKVEEGKPEVDVQRSKAES. The span at 414–437 shows a compositional bias: basic and acidic residues; the sequence is SEGKDAKVEEGKPEVDVQRSKAES.

This sequence belongs to the glutamyl-tRNA reductase family. Homodimer.

It catalyses the reaction (S)-4-amino-5-oxopentanoate + tRNA(Glu) + NADP(+) = L-glutamyl-tRNA(Glu) + NADPH + H(+). Its pathway is porphyrin-containing compound metabolism; protoporphyrin-IX biosynthesis; 5-aminolevulinate from L-glutamyl-tRNA(Glu): step 1/2. In terms of biological role, catalyzes the NADPH-dependent reduction of glutamyl-tRNA(Glu) to glutamate 1-semialdehyde (GSA). The chain is Glutamyl-tRNA reductase from Archaeoglobus fulgidus (strain ATCC 49558 / DSM 4304 / JCM 9628 / NBRC 100126 / VC-16).